The following is a 487-amino-acid chain: Bifunctional cytokinin biosynthesis protein (487 aa).

An adenylate isopentenyltransferase region spans residues 1-266; the sequence is MESTNRFMIG…RMASDFCYAS (266 aa). The interval 267–487 is cytokinin riboside 5'-monophosphate phosphoribohydrolase; that stretch reads TSISFHPINE…FSRKGELEWV (221 aa). Residues Glu-352, 380 to 381, 403 to 409, and Thr-415 contribute to the substrate site; these read RK and GYGTLEE.

The protein in the N-terminal section; belongs to the IPP transferase family. It in the C-terminal section; belongs to the LOG family.

The enzyme catalyses dimethylallyl diphosphate + AMP = N(6)-(dimethylallyl)adenosine 5'-phosphate + diphosphate. It catalyses the reaction N(6)-(dimethylallyl)adenosine 5'-phosphate + H2O = N(6)-dimethylallyladenine + D-ribose 5-phosphate. It carries out the reaction 9-ribosyl-trans-zeatin 5'-phosphate + H2O = trans-zeatin + D-ribose 5-phosphate. Its pathway is secondary metabolite biosynthesis. Its function is as follows. Bifunctional cytokinin synthesis protein; part of the gene cluster that mediates the biosynthesis of cytokinins such as fusatin, fusatinic acids or 8-oxofusatin, known for their growth promoting and anti-senescence activities toward host plants. FCK1 is a bifunctional enzyme that performs the first steps in the biosynthesis of Fusarium cytokinins. It first condenses adenosine monophosphate (AMP) with dimethylallyl diphosphate (DMAPP) to yield isoprenyl adenosine monophosphate. It then catalyzes the removal of the phosphoribose to produce isopentenylaldehyde. The cytochrome P450 monooxygenase then converts isopentenylaldehyde to trans-zeatin. A condensation step converts trans-zeatin to fusatin which is further modified to produce fusatinic acid. The mechanism for oxidation of fusatin to fusatinic acid remains unknown. 8-oxofusatin could be produced through several pathways, via direct oxygenation of fusatin, or via the 8-oxo-pentenyladenine intermediate which itself must arise from either the prenylation of 8-oxo-AMP by FCK1 and/or oxygenation of isopentenylaldehyde. Both the FCK3 and FCK4 enzymes act downstream of the identified cytokinins to produce yet unidentified compounds. The chain is Bifunctional cytokinin biosynthesis protein from Fusarium pseudograminearum (strain CS3096) (Wheat and barley crown-rot fungus).